A 479-amino-acid chain; its full sequence is UDP-N-acetylmuramate--L-alanine ligase (479 aa).

127–133 (GTHGKTT) lines the ATP pocket.

Belongs to the MurCDEF family.

The protein localises to the cytoplasm. It catalyses the reaction UDP-N-acetyl-alpha-D-muramate + L-alanine + ATP = UDP-N-acetyl-alpha-D-muramoyl-L-alanine + ADP + phosphate + H(+). It functions in the pathway cell wall biogenesis; peptidoglycan biosynthesis. Functionally, cell wall formation. This chain is UDP-N-acetylmuramate--L-alanine ligase, found in Shewanella denitrificans (strain OS217 / ATCC BAA-1090 / DSM 15013).